The following is a 225-amino-acid chain: Uracil-DNA glycosylase (225 aa).

The active-site Proton acceptor is the Asp65.

It belongs to the uracil-DNA glycosylase (UDG) superfamily. UNG family.

The protein resides in the cytoplasm. The enzyme catalyses Hydrolyzes single-stranded DNA or mismatched double-stranded DNA and polynucleotides, releasing free uracil.. In terms of biological role, excises uracil residues from the DNA which can arise as a result of misincorporation of dUMP residues by DNA polymerase or due to deamination of cytosine. The protein is Uracil-DNA glycosylase of Bacillus cereus (strain B4264).